The chain runs to 166 residues: 2-C-methyl-D-erythritol 2,4-cyclodiphosphate synthase (166 aa).

Residues D12 and H14 each contribute to the a divalent metal cation site. 4-CDP-2-C-methyl-D-erythritol 2-phosphate-binding positions include 12 to 14 (DSH) and 38 to 39 (HS). H46 provides a ligand contact to a divalent metal cation. Residues 60–62 (DIG), 65–69 (FPDTD), and R146 contribute to the 4-CDP-2-C-methyl-D-erythritol 2-phosphate site.

The protein belongs to the IspF family. In terms of assembly, homotrimer. The cofactor is a divalent metal cation.

The catalysed reaction is 4-CDP-2-C-methyl-D-erythritol 2-phosphate = 2-C-methyl-D-erythritol 2,4-cyclic diphosphate + CMP. It participates in isoprenoid biosynthesis; isopentenyl diphosphate biosynthesis via DXP pathway; isopentenyl diphosphate from 1-deoxy-D-xylulose 5-phosphate: step 4/6. Its function is as follows. Involved in the biosynthesis of isopentenyl diphosphate (IPP) and dimethylallyl diphosphate (DMAPP), two major building blocks of isoprenoid compounds. Catalyzes the conversion of 4-diphosphocytidyl-2-C-methyl-D-erythritol 2-phosphate (CDP-ME2P) to 2-C-methyl-D-erythritol 2,4-cyclodiphosphate (ME-CPP) with a corresponding release of cytidine 5-monophosphate (CMP). The chain is 2-C-methyl-D-erythritol 2,4-cyclodiphosphate synthase from Gemmatimonas aurantiaca (strain DSM 14586 / JCM 11422 / NBRC 100505 / T-27).